The primary structure comprises 423 residues: Histidine--tRNA ligase (423 aa).

It belongs to the class-II aminoacyl-tRNA synthetase family. In terms of assembly, homodimer.

It localises to the cytoplasm. It carries out the reaction tRNA(His) + L-histidine + ATP = L-histidyl-tRNA(His) + AMP + diphosphate + H(+). This Prochlorococcus marinus (strain NATL1A) protein is Histidine--tRNA ligase.